Here is a 290-residue protein sequence, read N- to C-terminus: Oxaloacetate decarboxylase (290 aa).

Substrate is bound at residue S53. D91 lines the Mg(2+) pocket. The substrate site is built by R162 and H238.

The protein belongs to the isocitrate lyase/PEP mutase superfamily. Oxaloacetate decarboxylase family. As to quaternary structure, homotetramer; dimer of dimers. Requires Mg(2+) as cofactor.

The catalysed reaction is oxaloacetate + H(+) = pyruvate + CO2. Catalyzes the decarboxylation of oxaloacetate into pyruvate. Seems to play a role in maintaining cellular concentrations of bicarbonate and pyruvate. In Ectopseudomonas mendocina (strain ymp) (Pseudomonas mendocina), this protein is Oxaloacetate decarboxylase.